Here is a 428-residue protein sequence, read N- to C-terminus: Histidine--tRNA ligase (428 aa).

Belongs to the class-II aminoacyl-tRNA synthetase family. As to quaternary structure, homodimer.

The protein localises to the cytoplasm. It carries out the reaction tRNA(His) + L-histidine + ATP = L-histidyl-tRNA(His) + AMP + diphosphate + H(+). In Chromohalobacter salexigens (strain ATCC BAA-138 / DSM 3043 / CIP 106854 / NCIMB 13768 / 1H11), this protein is Histidine--tRNA ligase.